The sequence spans 388 residues: Protein RecA (388 aa).

Residue 79–86 (GPESSGKT) coordinates ATP. Residues 347 to 372 (IDGEEVSEQDTENKKDEPKKEEAVNE) form a disordered region. Residues 357–369 (TENKKDEPKKEEA) show a composition bias toward basic and acidic residues.

This sequence belongs to the RecA family.

The protein resides in the cytoplasm. Functionally, can catalyze the hydrolysis of ATP in the presence of single-stranded DNA, the ATP-dependent uptake of single-stranded DNA by duplex DNA, and the ATP-dependent hybridization of homologous single-stranded DNAs. It interacts with LexA causing its activation and leading to its autocatalytic cleavage. The polypeptide is Protein RecA (Streptococcus pneumoniae (strain CGSP14)).